The primary structure comprises 154 residues: 17.7 kDa class I heat shock protein (154 aa).

Residues 40–154 form the sHSP domain; that stretch reads ETSAFANTRI…PDVKSIEISG (115 aa).

This sequence belongs to the small heat shock protein (HSP20) family. Forms oligomeric structures.

The protein resides in the cytoplasm. This is 17.7 kDa class I heat shock protein from Solanum peruvianum (Peruvian tomato).